Consider the following 305-residue polypeptide: Protoheme IX farnesyltransferase (305 aa).

9 helical membrane passes run 31-51 (VMSL…YSVH), 52-72 (PFIA…AGAI), 96-118 (VIES…FFMA), 123-145 (LLAS…IWLK), 151-171 (NIVI…AAVS), 179-199 (IILF…LALF), 225-245 (ILIY…IGMN), 247-267 (FIYL…AGSL), and 281-301 (FAYS…TNTI).

It belongs to the UbiA prenyltransferase family. Protoheme IX farnesyltransferase subfamily.

Its subcellular location is the cell membrane. It carries out the reaction heme b + (2E,6E)-farnesyl diphosphate + H2O = Fe(II)-heme o + diphosphate. Its pathway is porphyrin-containing compound metabolism; heme O biosynthesis; heme O from protoheme: step 1/1. Its function is as follows. Converts heme B (protoheme IX) to heme O by substitution of the vinyl group on carbon 2 of heme B porphyrin ring with a hydroxyethyl farnesyl side group. The polypeptide is Protoheme IX farnesyltransferase (Rickettsia africae (strain ESF-5)).